The primary structure comprises 127 residues: Small ribosomal subunit protein uS12 (127 aa).

D89 carries the post-translational modification 3-methylthioaspartic acid.

This sequence belongs to the universal ribosomal protein uS12 family. In terms of assembly, part of the 30S ribosomal subunit. Contacts proteins S8 and S17. May interact with IF1 in the 30S initiation complex.

In terms of biological role, with S4 and S5 plays an important role in translational accuracy. Functionally, interacts with and stabilizes bases of the 16S rRNA that are involved in tRNA selection in the A site and with the mRNA backbone. Located at the interface of the 30S and 50S subunits, it traverses the body of the 30S subunit contacting proteins on the other side and probably holding the rRNA structure together. The combined cluster of proteins S8, S12 and S17 appears to hold together the shoulder and platform of the 30S subunit. This chain is Small ribosomal subunit protein uS12, found in Aliarcobacter butzleri (strain RM4018) (Arcobacter butzleri).